The sequence spans 159 residues: Phosphopantetheine adenylyltransferase (159 aa).

Ser9 is a binding site for substrate. ATP contacts are provided by residues 9 to 10 and His17; that span reads SF. The substrate site is built by Lys41, Leu73, and Lys87. ATP-binding positions include 88 to 90, Glu98, and 123 to 129; these read GLR and YSYLSSS.

This sequence belongs to the bacterial CoaD family. As to quaternary structure, homohexamer. Mg(2+) is required as a cofactor.

The protein resides in the cytoplasm. The enzyme catalyses (R)-4'-phosphopantetheine + ATP + H(+) = 3'-dephospho-CoA + diphosphate. It functions in the pathway cofactor biosynthesis; coenzyme A biosynthesis; CoA from (R)-pantothenate: step 4/5. In terms of biological role, reversibly transfers an adenylyl group from ATP to 4'-phosphopantetheine, yielding dephospho-CoA (dPCoA) and pyrophosphate. In Clostridium botulinum (strain Eklund 17B / Type B), this protein is Phosphopantetheine adenylyltransferase.